The sequence spans 328 residues: MGVKFKDITNPEPIEMKELEGKILTVDASNVIYKFLSSMRQTDGTPLRDLNGHITSHLNGIMFQTSTLIEKDIKPVYVFDGKAPDLKKETQEERINIKKESEKKYLEAKEVGDVVAARKYAARTTHLNKEIIKSSKKLLDLMGIPYVQARTEGEAQASYMVSQNDAWAVVSQDYDCLQFGATRMIRNLKLSKSNSKNLELISLEKTLKELNLTREQLVDVAMLVGTDFNKGVYGIGAKKGIKLIHKYGTLEKALESLNETMEVDAELIREIFLNPNVVHNYTIEFKRPKKSQLLDFLCGEHDFDERRTISAIKKLQAKTAQSSLEDWF.

Residues 1–98 form an N-domain region; the sequence is MGVKFKDITN…ETQEERINIK (98 aa). Mg(2+)-binding residues include Asp27, Asp80, Glu152, Glu154, Asp173, Asp175, and Asp227. The interval 116 to 248 is I-domain; sequence AARKYAARTT…KGIKLIHKYG (133 aa). The tract at residues 320 to 328 is interaction with PCNA; that stretch reads AQSSLEDWF.

This sequence belongs to the XPG/RAD2 endonuclease family. FEN1 subfamily. In terms of assembly, interacts with PCNA. PCNA stimulates the nuclease activity without altering cleavage specificity. Mg(2+) is required as a cofactor.

Its function is as follows. Structure-specific nuclease with 5'-flap endonuclease and 5'-3' exonuclease activities involved in DNA replication and repair. During DNA replication, cleaves the 5'-overhanging flap structure that is generated by displacement synthesis when DNA polymerase encounters the 5'-end of a downstream Okazaki fragment. Binds the unpaired 3'-DNA end and kinks the DNA to facilitate 5' cleavage specificity. Cleaves one nucleotide into the double-stranded DNA from the junction in flap DNA, leaving a nick for ligation. Also involved in the base excision repair (BER) pathway. Acts as a genome stabilization factor that prevents flaps from equilibrating into structures that lead to duplications and deletions. Also possesses 5'-3' exonuclease activity on nicked or gapped double-stranded DNA. The polypeptide is Flap endonuclease 1 (Methanosphaera stadtmanae (strain ATCC 43021 / DSM 3091 / JCM 11832 / MCB-3)).